Consider the following 112-residue polypeptide: Transcriptional regulator WhiD (112 aa).

One can recognise a 4Fe-4S Wbl-type domain in the interval 22–86; sequence ACRGVDSSLF…GGLTEDEREE (65 aa). 4 residues coordinate [4Fe-4S] cluster: Cys23, Cys53, Cys56, and Cys62.

The protein belongs to the WhiB family. As to quaternary structure, the 4Fe-4S form is a monomer; upon oxidation forms a disulfide-bonded homodimer. It depends on [4Fe-4S] cluster as a cofactor. In terms of processing, can be nitrosylated by NO, 8 NO react per cluster. These complexes are quite stable under anaerobic conditions, but degrade slowly aerobically. Upon Fe-S cluster removal intramolecular disulfide bonds are formed.

It is found in the cytoplasm. Its function is as follows. Acts as a transcriptional regulator. Probably redox-responsive. The apo- but not holo-form probably binds DNA. Plays a positive role in prespore maturation and the initiation of sporulation septation. The polypeptide is Transcriptional regulator WhiD (whiD) (Streptomyces coelicolor (strain ATCC BAA-471 / A3(2) / M145)).